The sequence spans 245 residues: Small ribosomal subunit protein uS2 (245 aa).

It belongs to the universal ribosomal protein uS2 family.

This is Small ribosomal subunit protein uS2 from Pseudomonas fluorescens (strain ATCC BAA-477 / NRRL B-23932 / Pf-5).